Here is a 725-residue protein sequence, read N- to C-terminus: D-(-)-3-hydroxybutyrate oligomer hydrolase (725 aa).

An N-terminal signal peptide occupies residues 1 to 22 (MNTTRDANRLRQRASLSGLALA). The active-site Charge relay system is the Ser322.

The protein belongs to the D-(-)-3-hydroxybutyrate oligomer hydrolase family.

It is found in the secreted. The enzyme catalyses (3R)-hydroxybutanoate dimer + H2O = 2 (R)-3-hydroxybutanoate + H(+). It participates in lipid metabolism; butanoate metabolism. Functionally, participates in the degradation of poly-3-hydroxybutyrate (PHB). It works downstream of poly(3-hydroxybutyrate) depolymerase, hydrolyzing D(-)-3-hydroxybutyrate oligomers of various length (3HB-oligomers) into 3HB-monomers. This chain is D-(-)-3-hydroxybutyrate oligomer hydrolase, found in Ralstonia nicotianae (strain ATCC BAA-1114 / GMI1000) (Ralstonia solanacearum).